A 1649-amino-acid polypeptide reads, in one-letter code: DNA-directed RNA polymerase subunit beta' (1649 aa).

Cys63, Cys65, Cys78, and Cys81 together coordinate Zn(2+). Mg(2+)-binding residues include Asp747, Asp749, and Asp751. Residues Cys1078, Cys1269, Cys1276, and Cys1279 each contribute to the Zn(2+) site.

It belongs to the RNA polymerase beta' chain family. As to quaternary structure, the RNAP catalytic core consists of 2 alpha, 1 beta, 1 beta' and 1 omega subunit. When a sigma factor is associated with the core the holoenzyme is formed, which can initiate transcription. The cofactor is Mg(2+). Requires Zn(2+) as cofactor.

It carries out the reaction RNA(n) + a ribonucleoside 5'-triphosphate = RNA(n+1) + diphosphate. In terms of biological role, DNA-dependent RNA polymerase catalyzes the transcription of DNA into RNA using the four ribonucleoside triphosphates as substrates. This is DNA-directed RNA polymerase subunit beta' from Thermosipho melanesiensis (strain DSM 12029 / CIP 104789 / BI429).